The primary structure comprises 449 residues: Glutamate--tRNA ligase 2 (449 aa).

The 'HIGH' region signature appears at 11-21; sequence PSPTGFLHIGN. The 'KMSKS' region motif lies at 242-246; that stretch reads GLSKR. Lysine 245 lines the ATP pocket.

It belongs to the class-I aminoacyl-tRNA synthetase family. Glutamate--tRNA ligase type 1 subfamily. In terms of assembly, monomer.

It localises to the cytoplasm. The enzyme catalyses tRNA(Glu) + L-glutamate + ATP = L-glutamyl-tRNA(Glu) + AMP + diphosphate. Functionally, catalyzes the attachment of glutamate to tRNA(Glu) in a two-step reaction: glutamate is first activated by ATP to form Glu-AMP and then transferred to the acceptor end of tRNA(Glu). The polypeptide is Glutamate--tRNA ligase 2 (Methylorubrum populi (strain ATCC BAA-705 / NCIMB 13946 / BJ001) (Methylobacterium populi)).